Here is a 252-residue protein sequence, read N- to C-terminus: N-acetylglucosaminyl-phosphatidylinositol de-N-acetylase (252 aa).

Residues glutamate 2–tryptophan 22 traverse the membrane as a helical segment. Topologically, residues asparagine 23–leucine 252 are cytoplasmic.

Belongs to the PIGL family.

The protein resides in the endoplasmic reticulum membrane. The enzyme catalyses a 6-(N-acetyl-alpha-D-glucosaminyl)-1-(1,2-diacyl-sn-glycero-3-phospho)-1D-myo-inositol + H2O = a 6-(alpha-D-glucosaminyl)-1-(1,2-diacyl-sn-glycero-3-phospho)-1D-myo-inositol + acetate. The protein operates within glycolipid biosynthesis; glycosylphosphatidylinositol-anchor biosynthesis. Catalyzes the second step of glycosylphosphatidylinositol (GPI) biosynthesis, which is the de-N-acetylation of N-acetylglucosaminyl-phosphatidylinositol. This Rattus norvegicus (Rat) protein is N-acetylglucosaminyl-phosphatidylinositol de-N-acetylase (Pigl).